The primary structure comprises 273 residues: Undecaprenyl-diphosphatase (273 aa).

Helical transmembrane passes span 6–26 (SLLI…LPVS), 45–65 (AKTF…VMFW), 90–110 (LTLI…LLFH), 116–136 (LFNP…LIAA), 190–210 (YAAS…ATAL), 222–242 (GDIP…LIAI), and 252–272 (ISFI…YVVF).

It belongs to the UppP family.

It is found in the cell inner membrane. It catalyses the reaction di-trans,octa-cis-undecaprenyl diphosphate + H2O = di-trans,octa-cis-undecaprenyl phosphate + phosphate + H(+). Its function is as follows. Catalyzes the dephosphorylation of undecaprenyl diphosphate (UPP). Confers resistance to bacitracin. The sequence is that of Undecaprenyl-diphosphatase from Escherichia coli O139:H28 (strain E24377A / ETEC).